The chain runs to 519 residues: MTQADNQNPKPMVLIILDGFGESDETTHNAIKEANTPTLDKLFRHYPHTLLEASGRAVGLPDGQMGNSEVGHLHIGGGRKVPQDLTRIDAAIASGEFYENPALIEALEKAKALNKAVHILGLLSPGGVHSRDNQIAALVELAHHCGIKKIYLHAILDGRDTPPKSALLSIEKITDQFHAYGNGKIASLIGRYYAMDRDKRWDRTEKAYDLLTQGTAQFHALTAKEGLMLAYEQGNTDEFVSPTSIHRHNETPITIEDGDVVVFMNFRADRARQLTYAFLDDHFTAFNRQVRPKLSAFVTLTAYAKDIHAAVAFPPLELHNTLGEYLSARGYRQLRIAETEKYAHVTYFLNGGQEAPFNGEDRLLIPSPKVATYDLQPEMSAVEMTNKLVEIIQNDDYDLIVCNFANPDMVGHTGDETATREAIQVIDDCLKRIITALQSVGGEALITADHGNAEKMFDEKTNQPHTAHTSNLVPLIYVGREAQFCKEVGALDDVAPTLLYLMGLEKPREMTGRNLITLK.

Mn(2+)-binding residues include Asp-18 and Ser-68. The Phosphoserine intermediate role is filled by Ser-68. Residues His-129, 159–160, Arg-191, Arg-197, 267–270, and Lys-341 contribute to the substrate site; these read RD and RADR. Mn(2+) contacts are provided by Asp-408, His-412, Asp-449, His-450, and His-468.

It belongs to the BPG-independent phosphoglycerate mutase family. As to quaternary structure, monomer. Mn(2+) is required as a cofactor.

It catalyses the reaction (2R)-2-phosphoglycerate = (2R)-3-phosphoglycerate. It functions in the pathway carbohydrate degradation; glycolysis; pyruvate from D-glyceraldehyde 3-phosphate: step 3/5. In terms of biological role, catalyzes the interconversion of 2-phosphoglycerate and 3-phosphoglycerate. This chain is 2,3-bisphosphoglycerate-independent phosphoglycerate mutase, found in Coxiella burnetii (strain RSA 331 / Henzerling II).